A 346-amino-acid chain; its full sequence is Holliday junction branch migration complex subunit RuvB (346 aa).

The interval Met-1 to Tyr-182 is large ATPase domain (RuvB-L). Residues Leu-21, Arg-22, Gly-63, Lys-66, Thr-67, Thr-68, Glu-129–Phe-131, Arg-172, Tyr-182, and Arg-219 each bind ATP. Residue Thr-67 coordinates Mg(2+). Positions Thr-183–Leu-253 are small ATPAse domain (RuvB-S). The head domain (RuvB-H) stretch occupies residues Asn-256–Asp-346. Residues Arg-292, Arg-311, and Arg-316 each coordinate DNA.

This sequence belongs to the RuvB family. In terms of assembly, homohexamer. Forms an RuvA(8)-RuvB(12)-Holliday junction (HJ) complex. HJ DNA is sandwiched between 2 RuvA tetramers; dsDNA enters through RuvA and exits via RuvB. An RuvB hexamer assembles on each DNA strand where it exits the tetramer. Each RuvB hexamer is contacted by two RuvA subunits (via domain III) on 2 adjacent RuvB subunits; this complex drives branch migration. In the full resolvosome a probable DNA-RuvA(4)-RuvB(12)-RuvC(2) complex forms which resolves the HJ.

It is found in the cytoplasm. It catalyses the reaction ATP + H2O = ADP + phosphate + H(+). In terms of biological role, the RuvA-RuvB-RuvC complex processes Holliday junction (HJ) DNA during genetic recombination and DNA repair, while the RuvA-RuvB complex plays an important role in the rescue of blocked DNA replication forks via replication fork reversal (RFR). RuvA specifically binds to HJ cruciform DNA, conferring on it an open structure. The RuvB hexamer acts as an ATP-dependent pump, pulling dsDNA into and through the RuvAB complex. RuvB forms 2 homohexamers on either side of HJ DNA bound by 1 or 2 RuvA tetramers; 4 subunits per hexamer contact DNA at a time. Coordinated motions by a converter formed by DNA-disengaged RuvB subunits stimulates ATP hydrolysis and nucleotide exchange. Immobilization of the converter enables RuvB to convert the ATP-contained energy into a lever motion, pulling 2 nucleotides of DNA out of the RuvA tetramer per ATP hydrolyzed, thus driving DNA branch migration. The RuvB motors rotate together with the DNA substrate, which together with the progressing nucleotide cycle form the mechanistic basis for DNA recombination by continuous HJ branch migration. Branch migration allows RuvC to scan DNA until it finds its consensus sequence, where it cleaves and resolves cruciform DNA. The protein is Holliday junction branch migration complex subunit RuvB of Rhizobium etli (strain CIAT 652).